The following is a 208-amino-acid chain: Platelet glycoprotein Ib beta chain (208 aa).

The signal sequence occupies residues 1-26; that stretch reads MGSGPRGAVSLLLLMLAPPSCPAADC. 2 cysteine pairs are disulfide-bonded: Cys26–Cys32 and Cys30–Cys39. The LRRNT domain occupies 27–55; that stretch reads PAPCSCAGTLVDCGRRGLTWASLPTSFPV. Residues 27-147 are Extracellular-facing; that stretch reads PAPCSCAGTL…RAACAPGPLC (121 aa). The LRR repeat unit spans residues 60-83; the sequence is LVLTGNNLTALPSGLLDALPAVRT. Asn66 carries N-linked (GlcNAc...) asparagine glycosylation. The 55-residue stretch at 89–143 folds into the LRRCT domain; sequence NPWRCDCRLVPLRAWLAGRPERAPYRDLRCVAPPAVRGRLLPYLAEDDVRAACAP. Disulfide bonds link Cys93–Cys118 and Cys95–Cys141. The helical transmembrane segment at 148-172 threads the bilayer; that stretch reads WGALAAELALLGLGLLHALLLVLLL. Over 173-208 the chain is Cytoplasmic; sequence CRLRRLRARARARARAALRLSLTDPLVAEQDGTDES. Ser193 bears the Phosphoserine; by PKA mark. Thr195 is modified (phosphothreonine).

In terms of assembly, two GP-Ib beta are disulfide-linked to one GP-Ib alpha. GP-IX is complexed with the GP-Ib heterodimer via a non covalent linkage. Interacts with TRAF4.

The protein localises to the membrane. Functionally, gp-Ib, a surface membrane protein of platelets, participates in the formation of platelet plugs by binding to von Willebrand factor, which is already bound to the subendothelium. The protein is Platelet glycoprotein Ib beta chain (GP1BB) of Papio cynocephalus (Yellow baboon).